The chain runs to 188 residues: Threonylcarbamoyl-AMP synthase (188 aa).

One can recognise a YrdC-like domain in the interval 3-188; it reads QLSSTQVTPV…RSGLVLRNGQ (186 aa).

This sequence belongs to the SUA5 family. TsaC subfamily.

It is found in the cytoplasm. The enzyme catalyses L-threonine + hydrogencarbonate + ATP = L-threonylcarbamoyladenylate + diphosphate + H2O. Functionally, required for the formation of a threonylcarbamoyl group on adenosine at position 37 (t(6)A37) in tRNAs that read codons beginning with adenine. Catalyzes the conversion of L-threonine, HCO(3)(-)/CO(2) and ATP to give threonylcarbamoyl-AMP (TC-AMP) as the acyladenylate intermediate, with the release of diphosphate. The protein is Threonylcarbamoyl-AMP synthase of Shewanella denitrificans (strain OS217 / ATCC BAA-1090 / DSM 15013).